Here is an 883-residue protein sequence, read N- to C-terminus: Probable valine--tRNA ligase, cytoplasmic (883 aa).

Over residues 1–23 (MTLKMDRKALKEEKKKQKLEKFL) the composition is skewed to basic and acidic residues. The tract at residues 1 to 49 (MTLKMDRKALKEEKKKQKLEKFLNKKTTQSKISKAPKPAKNKSSSGYDP) is disordered. Residues 30 to 45 (SKISKAPKPAKNKSSS) are compositionally biased toward low complexity. The 'HIGH' region motif lies at 82–92 (PNITGSLHIGH). The 'KMSKS' region motif lies at 586-590 (KMSKS). Position 589 (lysine 589) interacts with ATP.

This sequence belongs to the class-I aminoacyl-tRNA synthetase family.

It localises to the cytoplasm. The enzyme catalyses tRNA(Val) + L-valine + ATP = L-valyl-tRNA(Val) + AMP + diphosphate. The polypeptide is Probable valine--tRNA ligase, cytoplasmic (Vairimorpha ceranae (strain BRL01) (Microsporidian parasite)).